The chain runs to 579 residues: UPF0324 membrane protein DVU_0943 (579 aa).

10 helical membrane passes run 26-45, 193-215, 225-243, 250-272, 305-327, 369-391, 430-452, 473-495, 515-533, and 546-568; these read YWAI…LFLA, AFNI…AIGM, FLVG…QMMG, YWGI…TVGT, IGIP…TFIF, LTLS…PAFI, AATI…AVYW, FPKF…GSLG, LRGW…ATNF, and LILY…YIMF.

The protein belongs to the UPF0324 family.

It localises to the cell membrane. The chain is UPF0324 membrane protein DVU_0943 from Nitratidesulfovibrio vulgaris (strain ATCC 29579 / DSM 644 / CCUG 34227 / NCIMB 8303 / VKM B-1760 / Hildenborough) (Desulfovibrio vulgaris).